A 118-amino-acid polypeptide reads, in one-letter code: Non-specific lipid-transfer protein A (118 aa).

Positions 1–25 (MAGVMKLACLVLACMIVAGPITANR) are cleaved as a signal peptide. 4 disulfide bridges follow: C29–C76, C39–C53, C54–C100, and C74–C114.

The protein belongs to the plant LTP family.

Plant non-specific lipid-transfer proteins transfer phospholipids as well as galactolipids across membranes. May play a role in wax or cutin deposition in the cell walls of expanding epidermal cells and certain secretory tissues. This is Non-specific lipid-transfer protein A (WAX9A) from Brassica oleracea var. italica (Broccoli).